The following is a 332-amino-acid chain: Glycerol-3-phosphate dehydrogenase [NAD(P)+] (332 aa).

NADPH-binding residues include Trp13, Arg33, and Lys107. The sn-glycerol 3-phosphate site is built by Lys107, Gly136, and Ser138. An NADPH-binding site is contributed by Ala140. Lys191, Asp244, Ser254, Arg255, and Asn256 together coordinate sn-glycerol 3-phosphate. The Proton acceptor role is filled by Lys191. Arg255 lines the NADPH pocket. NADPH is bound at residue Glu280.

Belongs to the NAD-dependent glycerol-3-phosphate dehydrogenase family.

It is found in the cytoplasm. The catalysed reaction is sn-glycerol 3-phosphate + NAD(+) = dihydroxyacetone phosphate + NADH + H(+). It carries out the reaction sn-glycerol 3-phosphate + NADP(+) = dihydroxyacetone phosphate + NADPH + H(+). Its pathway is membrane lipid metabolism; glycerophospholipid metabolism. Catalyzes the reduction of the glycolytic intermediate dihydroxyacetone phosphate (DHAP) to sn-glycerol 3-phosphate (G3P), the key precursor for phospholipid synthesis. This chain is Glycerol-3-phosphate dehydrogenase [NAD(P)+], found in Alkalilimnicola ehrlichii (strain ATCC BAA-1101 / DSM 17681 / MLHE-1).